The primary structure comprises 336 residues: Immune-associated nucleotide-binding protein 6 (336 aa).

The region spanning 33-241 is the AIG1-type G domain; sequence EPVKNVVLVG…FTDTMHRRIQ (209 aa). Residues 42 to 49 form a G1 region; that stretch reads GRTGNGKS. Residues 42–50 and Ser63 contribute to the GTP site; that span reads GRTGNGKSA. The tract at residues 69-73 is G2; sequence GVTTR. A G3 region spans residues 91 to 94; it reads DTPG. The segment at 161-164 is G4; sequence TCGD. The tract at residues 200–202 is G5; that stretch reads DNR. Position 201 (Asn201) interacts with GTP. A coiled-coil region spans residues 237 to 270; that stretch reads HRRIQEEAARVKREEKEIEEKNIADEEKAALKKQ.

It belongs to the TRAFAC class TrmE-Era-EngA-EngB-Septin-like GTPase superfamily. AIG1/Toc34/Toc159-like paraseptin GTPase family. IAN subfamily. In terms of tissue distribution, mostly expressed in pollen. Also detected in lateral roots and radicles.

The protein is Immune-associated nucleotide-binding protein 6 of Arabidopsis thaliana (Mouse-ear cress).